The sequence spans 394 residues: Elongation factor Tu (394 aa).

Residues 10–205 (KPHMNVGTIG…TMDNYFDLPE (196 aa)) form the tr-type G domain. The tract at residues 19–26 (GHVDHGKT) is G1. Position 19–26 (19–26 (GHVDHGKT)) interacts with GTP. Position 26 (Thr26) interacts with Mg(2+). The tract at residues 61-65 (GITIN) is G2. The tract at residues 82–85 (DCPG) is G3. GTP contacts are provided by residues 82 to 86 (DCPGH) and 137 to 140 (NKLD). The interval 137–140 (NKLD) is G4. Residues 173–175 (SAF) are G5.

It belongs to the TRAFAC class translation factor GTPase superfamily. Classic translation factor GTPase family. EF-Tu/EF-1A subfamily. Monomer.

The protein localises to the cytoplasm. The enzyme catalyses GTP + H2O = GDP + phosphate + H(+). Its function is as follows. GTP hydrolase that promotes the GTP-dependent binding of aminoacyl-tRNA to the A-site of ribosomes during protein biosynthesis. The chain is Elongation factor Tu from Borrelia duttonii (strain Ly).